Here is a 386-residue protein sequence, read N- to C-terminus: 8-amino-7-oxononanoate synthase (386 aa).

Arg-23 contacts substrate. Residue 110 to 111 (GY) participates in pyridoxal 5'-phosphate binding. His-135 contacts substrate. Pyridoxal 5'-phosphate-binding residues include Ser-181, His-209, and Thr-236. N6-(pyridoxal phosphate)lysine is present on Lys-239. Thr-354 is a binding site for substrate.

Belongs to the class-II pyridoxal-phosphate-dependent aminotransferase family. BioF subfamily. As to quaternary structure, homodimer. Pyridoxal 5'-phosphate is required as a cofactor.

It catalyses the reaction 6-carboxyhexanoyl-[ACP] + L-alanine + H(+) = (8S)-8-amino-7-oxononanoate + holo-[ACP] + CO2. Its pathway is cofactor biosynthesis; biotin biosynthesis. Its function is as follows. Catalyzes the decarboxylative condensation of pimeloyl-[acyl-carrier protein] and L-alanine to produce 8-amino-7-oxononanoate (AON), [acyl-carrier protein], and carbon dioxide. The chain is 8-amino-7-oxononanoate synthase from Thiobacillus denitrificans (strain ATCC 25259 / T1).